The primary structure comprises 74 residues: EMBRYO SURROUNDING FACTOR 1-like protein 4 (74 aa).

An N-terminal signal peptide occupies residues 1–22; sequence MKSSHAYLVCILLLSLFSLHQC. Disulfide bonds link Cys36–Cys51, Cys41–Cys70, Cys49–Cys66, and Cys52–Cys59.

The protein belongs to the MEG family. In terms of tissue distribution, expressed in flowers.

This Arabidopsis thaliana (Mouse-ear cress) protein is EMBRYO SURROUNDING FACTOR 1-like protein 4 (ESFL4).